Consider the following 404-residue polypeptide: S-adenosylmethionine synthase (404 aa).

Histidine 18 is a binding site for ATP. Position 20 (aspartate 20) interacts with Mg(2+). Glutamate 46 serves as a coordination point for K(+). Positions 59 and 102 each coordinate L-methionine. The tract at residues 102–112 (QSPDIAQGVDT) is flexible loop. ATP is bound by residues 177 to 179 (DGK), 249 to 250 (KF), aspartate 258, 264 to 265 (RK), alanine 281, and lysine 285. Aspartate 258 contributes to the L-methionine binding site. Lysine 289 provides a ligand contact to L-methionine.

Belongs to the AdoMet synthase family. As to quaternary structure, homotetramer; dimer of dimers. It depends on Mg(2+) as a cofactor. K(+) is required as a cofactor.

The protein resides in the cytoplasm. It carries out the reaction L-methionine + ATP + H2O = S-adenosyl-L-methionine + phosphate + diphosphate. It functions in the pathway amino-acid biosynthesis; S-adenosyl-L-methionine biosynthesis; S-adenosyl-L-methionine from L-methionine: step 1/1. Catalyzes the formation of S-adenosylmethionine (AdoMet) from methionine and ATP. The overall synthetic reaction is composed of two sequential steps, AdoMet formation and the subsequent tripolyphosphate hydrolysis which occurs prior to release of AdoMet from the enzyme. This chain is S-adenosylmethionine synthase, found in Nocardia farcinica (strain IFM 10152).